A 642-amino-acid chain; its full sequence is RNA polymerase sigma factor RpoD (642 aa).

Positions H199–E228 are disordered. A compositionally biased stretch (acidic residues) spans N212–E228. Positions M403–T473 are sigma-70 factor domain-2. The short motif at D427–Q430 is the Interaction with polymerase core subunit RpoC element. The sigma-70 factor domain-3 stretch occupies residues E482 to A558. The tract at residues I571–H624 is sigma-70 factor domain-4. Residues L597 to A616 constitute a DNA-binding region (H-T-H motif).

It belongs to the sigma-70 factor family. RpoD/SigA subfamily. As to quaternary structure, interacts transiently with the RNA polymerase catalytic core.

It localises to the cytoplasm. Sigma factors are initiation factors that promote the attachment of RNA polymerase to specific initiation sites and are then released. This sigma factor is the primary sigma factor during exponential growth. The sequence is that of RNA polymerase sigma factor RpoD from Neisseria gonorrhoeae.